Here is a 520-residue protein sequence, read N- to C-terminus: Mitogen-activated protein kinase kinase 3 (520 aa).

Position 69 is a phosphoserine (Ser69). Residues 83 to 339 (MRVFGAIGSG…ADQLLSHPFI (257 aa)) form the Protein kinase domain. ATP is bound by residues 89 to 97 (IGSGASSVV) and Lys112. Asp207 acts as the Proton acceptor in catalysis. A Phosphoserine modification is found at Ser235. Phosphothreonine occurs at positions 241 and 245. The 151-residue stretch at 366 to 516 (LADMLTIHYY…YFLAKQELYI (151 aa)) folds into the NTF2 domain.

This sequence belongs to the protein kinase superfamily. STE Ser/Thr protein kinase family. MAP kinase kinase subfamily. In terms of assembly, interacts with MPK1, MPK2 and MPK7. Interacts with P.syringae type III effector HopF2. Interacts with MPK14. Binds to MAPKKK17 and MAPKKK18. Binds to MAPKKK20. Phosphorylation at Ser-235 and Thr-241 by MAP kinase kinase kinases positively regulates kinase activity. Phosphorylated by MAPKKK20. As to expression, mostly expressed in leaves, and, to a lower extent, in roots, seedlings, flower buds, flowers and siliques.

Its subcellular location is the nucleus. The protein resides in the cytoplasm. The catalysed reaction is L-seryl-[protein] + ATP = O-phospho-L-seryl-[protein] + ADP + H(+). It catalyses the reaction L-threonyl-[protein] + ATP = O-phospho-L-threonyl-[protein] + ADP + H(+). The enzyme catalyses L-tyrosyl-[protein] + ATP = O-phospho-L-tyrosyl-[protein] + ADP + H(+). Functionally, MKK3-MPK6 module plays an important role in the jasmonate signal transduction pathway through the negative regulation of MYC2/JIN1 expression. Activates by phosphorylation the downstream MPK6, MPK7 and MPK8. MKK3-MPK7 module acts as a positive regulator of PR1 gene expression. MKK3-MPK8 module negatively regulates ROS accumulation through controlling expression of the RBOHD gene. Component of the abscisic acid (ABA) signaling pathway that may act as ABA signal transducer in the context of abiotic stresses. Activator of the C group MAP kinases. Activates MPK7 in response to ABA. Mitogen-activated protein kinase (MAPK) that is specifically regulated by MAPKKK20 and mediates signaling that regulates cortical microtubule functions. This is Mitogen-activated protein kinase kinase 3 from Arabidopsis thaliana (Mouse-ear cress).